The chain runs to 349 residues: SUMO-activating enzyme subunit 1 (349 aa).

An N-acetylmethionine modification is found at Met-1. An N-acetylvaline; in SUMO-activating enzyme subunit 1, N-terminally processed modification is found at Val-2. Ser-15 is subject to Phosphoserine. Residue Lys-201 is modified to N6-acetyllysine.

It belongs to the ubiquitin-activating E1 family. Heterodimer of SAE1 and UBA2/SAE2. The heterodimer corresponds to the two domains that are encoded on a single polypeptide chain in ubiquitin-activating enzyme E1. Interacts with UBE2I.

Its subcellular location is the nucleus. It participates in protein modification; protein sumoylation. In terms of biological role, the heterodimer acts as an E1 ligase for SUMO1, SUMO2, SUMO3, and probably SUMO4. It mediates ATP-dependent activation of SUMO proteins followed by formation of a thioester bond between a SUMO protein and a conserved active site cysteine residue on UBA2/SAE2. The protein is SUMO-activating enzyme subunit 1 (Sae1) of Rattus norvegicus (Rat).